A 377-amino-acid chain; its full sequence is Actin-related protein T2 (377 aa).

Belongs to the actin family.

Its subcellular location is the cytoplasm. It localises to the cytoskeleton. This chain is Actin-related protein T2 (ACTRT2), found in Macaca fascicularis (Crab-eating macaque).